The primary structure comprises 417 residues: Adenylosuccinate synthetase (417 aa).

GTP contacts are provided by residues 11–17 (GDEGKGK) and 39–41 (GHT). The active-site Proton acceptor is aspartate 12. Mg(2+) contacts are provided by aspartate 12 and glycine 39. IMP-binding positions include 12–15 (DEGK), 37–40 (NAGH), threonine 126, arginine 140, glutamine 218, threonine 233, and arginine 295. The Proton donor role is filled by histidine 40. 291–297 (TVSGRIR) provides a ligand contact to substrate. Residues arginine 297, 323–325 (KLD), and 406–408 (SNG) each bind GTP.

The protein belongs to the adenylosuccinate synthetase family. In terms of assembly, homodimer. It depends on Mg(2+) as a cofactor.

It is found in the cytoplasm. It carries out the reaction IMP + L-aspartate + GTP = N(6)-(1,2-dicarboxyethyl)-AMP + GDP + phosphate + 2 H(+). The protein operates within purine metabolism; AMP biosynthesis via de novo pathway; AMP from IMP: step 1/2. In terms of biological role, plays an important role in the de novo pathway of purine nucleotide biosynthesis. Catalyzes the first committed step in the biosynthesis of AMP from IMP. This is Adenylosuccinate synthetase from Neorickettsia sennetsu (strain ATCC VR-367 / Miyayama) (Ehrlichia sennetsu).